The chain runs to 142 residues: Photosystem II extrinsic protein U (142 aa).

Positions Met-1–Ala-28 are cleaved as a signal peptide.

This sequence belongs to the PsbU family. In terms of assembly, PSII is composed of 1 copy each of membrane proteins PsbA, PsbB, PsbC, PsbD, PsbE, PsbF, PsbH, PsbI, PsbJ, PsbK, PsbL, PsbM, PsbT, PsbX, PsbY, PsbZ, Psb30/Ycf12, peripheral proteins PsbO, CyanoQ (PsbQ), PsbU, PsbV and a large number of cofactors. It forms dimeric complexes.

It is found in the cellular thylakoid membrane. Its function is as follows. One of the extrinsic, lumenal subunits of photosystem II (PSII). PSII is a light-driven water plastoquinone oxidoreductase, using light energy to abstract electrons from H(2)O, generating a proton gradient subsequently used for ATP formation. The extrinsic proteins stabilize the structure of photosystem II oxygen-evolving complex (OEC), the ion environment of oxygen evolution and protect the OEC against heat-induced inactivation. In Trichodesmium erythraeum (strain IMS101), this protein is Photosystem II extrinsic protein U.